The sequence spans 129 residues: Aspartate 1-decarboxylase (129 aa).

The Schiff-base intermediate with substrate; via pyruvic acid role is filled by Ser25. A Pyruvic acid (Ser) modification is found at Ser25. Residue Thr57 participates in substrate binding. Residue Tyr58 is the Proton donor of the active site. Residue 73 to 75 (GAA) participates in substrate binding.

It belongs to the PanD family. As to quaternary structure, heterooctamer of four alpha and four beta subunits. Pyruvate serves as cofactor. Is synthesized initially as an inactive proenzyme, which is activated by self-cleavage at a specific serine bond to produce a beta-subunit with a hydroxyl group at its C-terminus and an alpha-subunit with a pyruvoyl group at its N-terminus.

The protein localises to the cytoplasm. The catalysed reaction is L-aspartate + H(+) = beta-alanine + CO2. The protein operates within cofactor biosynthesis; (R)-pantothenate biosynthesis; beta-alanine from L-aspartate: step 1/1. Functionally, catalyzes the pyruvoyl-dependent decarboxylation of aspartate to produce beta-alanine. The protein is Aspartate 1-decarboxylase of Prosthecochloris aestuarii (strain DSM 271 / SK 413).